Consider the following 376-residue polypeptide: MTVKLTIDCMGGDHGPSVTVPAAVNFVRSHADAHLMLVGIESAIRAQLKKLKAADNPALTVVSASEIVAMDDPVEVALRKKKDSSMRVALNRVKDDEAQACISAGNTGALMAVSRYVLKTLPGIERPAIAFALPNPTGYTTMLDLGANVDCEPQHLLQFAEMGHALVAAVEGKERPSIGLLNIGEEVIKGNDIIKRAGELLRTSTLNFRGNVEGNDIYKGTVDVIVCDGFVGNVALKTSEGLAQMLSDIIKEEFGRSWLTKVMAVLALPVLLRFKKRVDHRQYNGAALLGLRGLVIKSHGSADAYAFEWAIKRGYDAVKNGVLERLARAMEENAGSLEQAKRDAGGPGSASQMASPIAGPVSGQPAEPYSAQSSKA.

The tract at residues 334–376 is disordered; it reads AGSLEQAKRDAGGPGSASQMASPIAGPVSGQPAEPYSAQSSKA.

It belongs to the PlsX family. Homodimer. Probably interacts with PlsY.

The protein resides in the cytoplasm. The enzyme catalyses a fatty acyl-[ACP] + phosphate = an acyl phosphate + holo-[ACP]. The protein operates within lipid metabolism; phospholipid metabolism. In terms of biological role, catalyzes the reversible formation of acyl-phosphate (acyl-PO(4)) from acyl-[acyl-carrier-protein] (acyl-ACP). This enzyme utilizes acyl-ACP as fatty acyl donor, but not acyl-CoA. The chain is Phosphate acyltransferase from Paraburkholderia phymatum (strain DSM 17167 / CIP 108236 / LMG 21445 / STM815) (Burkholderia phymatum).